Here is a 622-residue protein sequence, read N- to C-terminus: uncharacterized protein (622 aa).

Residues 157-166 (LKESPLRDQQ) are compositionally biased toward basic and acidic residues. The disordered stretch occupies residues 157-238 (LKESPLRDQQ…GLPDHNSISE (82 aa)).

This is an uncharacterized protein from Homo sapiens (Human).